We begin with the raw amino-acid sequence, 1170 residues long: DNA-directed RNA polymerase subunit beta (1170 aa).

This sequence belongs to the RNA polymerase beta chain family. In terms of assembly, the RNAP catalytic core consists of 2 alpha, 1 beta, 1 beta' and 1 omega subunit. When a sigma factor is associated with the core the holoenzyme is formed, which can initiate transcription.

It catalyses the reaction RNA(n) + a ribonucleoside 5'-triphosphate = RNA(n+1) + diphosphate. Its function is as follows. DNA-dependent RNA polymerase catalyzes the transcription of DNA into RNA using the four ribonucleoside triphosphates as substrates. The chain is DNA-directed RNA polymerase subunit beta from Corynebacterium urealyticum (strain ATCC 43042 / DSM 7109).